The chain runs to 140 residues: Ribosomal RNA large subunit methyltransferase H (140 aa).

S-adenosyl-L-methionine-binding residues include L55 and G87.

This sequence belongs to the RNA methyltransferase RlmH family. Homodimer.

It localises to the cytoplasm. The enzyme catalyses pseudouridine(1915) in 23S rRNA + S-adenosyl-L-methionine = N(3)-methylpseudouridine(1915) in 23S rRNA + S-adenosyl-L-homocysteine + H(+). In terms of biological role, specifically methylates the pseudouridine at position 1915 (m3Psi1915) in 23S rRNA. This is Ribosomal RNA large subunit methyltransferase H from Rhizorhabdus wittichii (strain DSM 6014 / CCUG 31198 / JCM 15750 / NBRC 105917 / EY 4224 / RW1) (Sphingomonas wittichii).